We begin with the raw amino-acid sequence, 391 residues long: Acetate kinase (391 aa).

Residue N4 participates in Mg(2+) binding. K11 is a binding site for ATP. R85 contributes to the substrate binding site. The active-site Proton donor/acceptor is the D142. ATP-binding positions include 202–206, 277–279, and 325–329; these read HLGNG, DLR, and GIGEN. A Mg(2+)-binding site is contributed by E378.

This sequence belongs to the acetokinase family. As to quaternary structure, homodimer. It depends on Mg(2+) as a cofactor. The cofactor is Mn(2+).

The protein resides in the cytoplasm. It catalyses the reaction acetate + ATP = acetyl phosphate + ADP. The protein operates within metabolic intermediate biosynthesis; acetyl-CoA biosynthesis; acetyl-CoA from acetate: step 1/2. Its function is as follows. Catalyzes the formation of acetyl phosphate from acetate and ATP. Can also catalyze the reverse reaction. The protein is Acetate kinase of Halalkalibacterium halodurans (strain ATCC BAA-125 / DSM 18197 / FERM 7344 / JCM 9153 / C-125) (Bacillus halodurans).